The following is a 257-amino-acid chain: Zinc uptake system ATP-binding protein ZurA (257 aa).

Residues 5-241 enclose the ABC transporter domain; that stretch reads IEVNNVSYHY…ADRELEILAE (237 aa). 37 to 44 lines the ATP pocket; the sequence is GPNGSGKS.

The protein belongs to the ABC transporter superfamily.

Involved in a zinc uptake transport system. In Listeria innocua serovar 6a (strain ATCC BAA-680 / CLIP 11262), this protein is Zinc uptake system ATP-binding protein ZurA (zurA).